A 358-amino-acid chain; its full sequence is DNA polymerase IV (358 aa).

The 182-residue stretch at 4–185 folds into the UmuC domain; sequence IIHIDMDCYF…LPLIKIPGVG (182 aa). Mg(2+) is bound by residues D8 and D103. The active site involves E104.

This sequence belongs to the DNA polymerase type-Y family. In terms of assembly, monomer. Mg(2+) is required as a cofactor.

It localises to the cytoplasm. It carries out the reaction DNA(n) + a 2'-deoxyribonucleoside 5'-triphosphate = DNA(n+1) + diphosphate. In terms of biological role, poorly processive, error-prone DNA polymerase involved in untargeted mutagenesis. Copies undamaged DNA at stalled replication forks, which arise in vivo from mismatched or misaligned primer ends. These misaligned primers can be extended by PolIV. Exhibits no 3'-5' exonuclease (proofreading) activity. May be involved in translesional synthesis, in conjunction with the beta clamp from PolIII. In Shewanella denitrificans (strain OS217 / ATCC BAA-1090 / DSM 15013), this protein is DNA polymerase IV.